Reading from the N-terminus, the 666-residue chain is ESX-1 secretion-associated protein EspI (666 aa).

Residues M1–M15 show a composition bias toward basic and acidic residues. Positions M1 to Q378 are disordered. Over residues A22–A31 the composition is skewed to low complexity. Composition is skewed to pro residues over residues A64 to M80, P87 to T144, and P188 to S205. Residues H222–R231 show a composition bias toward basic residues. Pro residues predominate over residues P284–S297. Residues P357–K371 show a composition bias toward basic residues. L424–T431 is a binding site for ATP.

Required to repress ESX-1-mediated secretion under low ATP conditions. This function requires the ATP-binding motif. The protein is ESX-1 secretion-associated protein EspI of Mycobacterium tuberculosis (strain CDC 1551 / Oshkosh).